Here is a 113-residue protein sequence, read N- to C-terminus: UPF0122 protein M6_Spy0905 (113 aa).

The protein belongs to the UPF0122 family.

Might take part in the signal recognition particle (SRP) pathway. This is inferred from the conservation of its genetic proximity to ftsY/ffh. May be a regulatory protein. The protein is UPF0122 protein M6_Spy0905 of Streptococcus pyogenes serotype M6 (strain ATCC BAA-946 / MGAS10394).